The primary structure comprises 449 residues: Capsid protein (449 aa).

The interval 1–43 is DNA-binding; sequence MARRARRPRGRFYAFRRGRWHNLKRLRRRYKFRHRRRQRYRRR. Positions 6-47 are nuclear localization signals; sequence RRPRGRFYAFRRGRWHNLKRLRRRYKFRHRRRQRYRRRAFRK.

Belongs to the gyrovirus capsid protein family. In terms of assembly, homomultimer (Potential). Interacts with Rep; this interaction relocates Rep into the nucleus.

It is found in the host nucleus. It localises to the virion. In terms of biological role, self-assembles to form the virion icosahedral capsid with a T=1 symmetry. This very small capsid (25 nm in diameter) allows the virus to be very stable in the environment and resistant to some disinfectants, including detergents. Essential for the initial attachment to host receptors. After attachment, the virus is endocytosed and traffics to the nucleus. The capsid protein binds and transports the viral genome and Rep across the nuclear envelope. This chain is Capsid protein (VP1), found in Chicken anemia virus (isolate USA CIA-1) (CAV).